The chain runs to 424 residues: tRNA(Ile)-lysidine synthase (424 aa).

ATP is bound at residue 26–31 (SGGIDS).

This sequence belongs to the tRNA(Ile)-lysidine synthase family.

Its subcellular location is the cytoplasm. It carries out the reaction cytidine(34) in tRNA(Ile2) + L-lysine + ATP = lysidine(34) in tRNA(Ile2) + AMP + diphosphate + H(+). In terms of biological role, ligates lysine onto the cytidine present at position 34 of the AUA codon-specific tRNA(Ile) that contains the anticodon CAU, in an ATP-dependent manner. Cytidine is converted to lysidine, thus changing the amino acid specificity of the tRNA from methionine to isoleucine. This is tRNA(Ile)-lysidine synthase from Streptococcus agalactiae serotype V (strain ATCC BAA-611 / 2603 V/R).